The chain runs to 269 residues: Formamidopyrimidine-DNA glycosylase (269 aa).

The active-site Schiff-base intermediate with DNA is proline 2. Glutamate 3 (proton donor) is an active-site residue. The active-site Proton donor; for beta-elimination activity is the lysine 57. DNA contacts are provided by histidine 90, arginine 109, and lysine 150. The FPG-type zinc-finger motif lies at 235-269 (QVYGREGEPCRVCGTPILAGKHAQRRTYWCRRCQK). The active-site Proton donor; for delta-elimination activity is arginine 259.

It belongs to the FPG family. In terms of assembly, monomer. The cofactor is Zn(2+).

The enzyme catalyses Hydrolysis of DNA containing ring-opened 7-methylguanine residues, releasing 2,6-diamino-4-hydroxy-5-(N-methyl)formamidopyrimidine.. It catalyses the reaction 2'-deoxyribonucleotide-(2'-deoxyribose 5'-phosphate)-2'-deoxyribonucleotide-DNA = a 3'-end 2'-deoxyribonucleotide-(2,3-dehydro-2,3-deoxyribose 5'-phosphate)-DNA + a 5'-end 5'-phospho-2'-deoxyribonucleoside-DNA + H(+). Functionally, involved in base excision repair of DNA damaged by oxidation or by mutagenic agents. Acts as a DNA glycosylase that recognizes and removes damaged bases. Has a preference for oxidized purines, such as 7,8-dihydro-8-oxoguanine (8-oxoG). Has AP (apurinic/apyrimidinic) lyase activity and introduces nicks in the DNA strand. Cleaves the DNA backbone by beta-delta elimination to generate a single-strand break at the site of the removed base with both 3'- and 5'-phosphates. The sequence is that of Formamidopyrimidine-DNA glycosylase from Cronobacter sakazakii (strain ATCC BAA-894) (Enterobacter sakazakii).